The following is a 734-amino-acid chain: Exonuclease 1 (734 aa).

The segment at 1-99 (MGIQGLLQFL…KARREKRQTN (99 aa)) is N-domain. Asp30, Asp78, Glu150, Asp152, Asp171, Asp173, and Asp225 together coordinate Mg(2+). Residues 138–229 (RSEGVDYIVA…ILSGCDYLPS (92 aa)) are I-domain. 3 disordered regions span residues 599–650 (EAEN…CQFT), 656–675 (AHQSFFPEPKGSAPKSKVPG), and 685–716 (GLRTKVKPRAPAKVSGLTNRSNTKATRNNENV). Residues 604 to 620 (PSWQSSCIKSDTVSQID) show a composition bias toward polar residues. Basic and acidic residues predominate over residues 621–641 (SNEKLLKKQDIEDTDSDEHAS). A compositionally biased stretch (polar residues) spans 700–715 (GLTNRSNTKATRNNEN).

Belongs to the XPG/RAD2 endonuclease family. EXO1 subfamily. Mg(2+) serves as cofactor.

The protein resides in the nucleus. In terms of biological role, 5'-&gt;3' double-stranded DNA exonuclease which may also contain a cryptic 3'-&gt;5' double-stranded DNA exonuclease activity. Also exhibits endonuclease activity against 5'-overhanging flap structures similar to those generated by displacement synthesis when DNA polymerase encounters the 5'-end of a downstream Okazaki fragment. Required for DNA mismatch repair (MMR). The polypeptide is Exonuclease 1 (exo1) (Xenopus laevis (African clawed frog)).